A 91-amino-acid chain; its full sequence is DNA/RNA-binding protein Alba (91 aa).

It belongs to the histone-like Alba family.

Its subcellular location is the cytoplasm. The protein resides in the chromosome. Binds double-stranded DNA tightly but without sequence specificity. Involved in DNA compaction. The protein is DNA/RNA-binding protein Alba of Methanoculleus marisnigri (strain ATCC 35101 / DSM 1498 / JR1).